Reading from the N-terminus, the 88-residue chain is Phosphocarrier protein HPr (88 aa).

Residues 1 to 88 form the HPr domain; that stretch reads MKTQQFTVID…TLLTEMGLAQ (88 aa). His15 functions as the Pros-phosphohistidine intermediate in the catalytic mechanism. Position 46 is a phosphoserine; by HPrK/P (Ser46).

This sequence belongs to the HPr family.

Its subcellular location is the cytoplasm. Its activity is regulated as follows. Phosphorylation on Ser-46 inhibits the phosphoryl transfer from enzyme I to HPr. Its function is as follows. General (non sugar-specific) component of the phosphoenolpyruvate-dependent sugar phosphotransferase system (sugar PTS). This major carbohydrate active-transport system catalyzes the phosphorylation of incoming sugar substrates concomitantly with their translocation across the cell membrane. The phosphoryl group from phosphoenolpyruvate (PEP) is transferred to the phosphoryl carrier protein HPr by enzyme I. Phospho-HPr then transfers it to the PTS EIIA domain. In terms of biological role, P-Ser-HPr interacts with the catabolite control protein A (CcpA), forming a complex that binds to DNA at the catabolite response elements cre, operator sites preceding a large number of catabolite-regulated genes. Thus, P-Ser-HPr is a corepressor in carbon catabolite repression (CCR), a mechanism that allows bacteria to coordinate and optimize the utilization of available carbon sources. P-Ser-HPr also plays a role in inducer exclusion, in which it probably interacts with several non-PTS permeases and inhibits their transport activity. This Lysinibacillus sphaericus (Bacillus sphaericus) protein is Phosphocarrier protein HPr (ptsH).